Consider the following 606-residue polypeptide: 4-hydroxy-3-methylbut-2-en-1-yl diphosphate synthase (flavodoxin) (606 aa).

Residues Cys513, Cys516, Cys547, and Glu554 each coordinate [4Fe-4S] cluster.

The protein belongs to the IspG family. [4Fe-4S] cluster serves as cofactor.

The catalysed reaction is (2E)-4-hydroxy-3-methylbut-2-enyl diphosphate + oxidized [flavodoxin] + H2O + 2 H(+) = 2-C-methyl-D-erythritol 2,4-cyclic diphosphate + reduced [flavodoxin]. It participates in isoprenoid biosynthesis; isopentenyl diphosphate biosynthesis via DXP pathway; isopentenyl diphosphate from 1-deoxy-D-xylulose 5-phosphate: step 5/6. Converts 2C-methyl-D-erythritol 2,4-cyclodiphosphate (ME-2,4cPP) into 1-hydroxy-2-methyl-2-(E)-butenyl 4-diphosphate. This Chlamydia abortus (strain DSM 27085 / S26/3) (Chlamydophila abortus) protein is 4-hydroxy-3-methylbut-2-en-1-yl diphosphate synthase (flavodoxin).